A 247-amino-acid chain; its full sequence is Uridylate kinase (247 aa).

15–18 is a binding site for ATP; sequence KLSG. Residues 23 to 28 form an involved in allosteric activation by GTP region; the sequence is GDEGFG. Residue G57 participates in UMP binding. G58 and R62 together coordinate ATP. Residues D77 and 138–145 each bind UMP; that span reads TGNPFFTT. T165, Y171, and D174 together coordinate ATP.

The protein belongs to the UMP kinase family. In terms of assembly, homohexamer.

It is found in the cytoplasm. The enzyme catalyses UMP + ATP = UDP + ADP. It functions in the pathway pyrimidine metabolism; CTP biosynthesis via de novo pathway; UDP from UMP (UMPK route): step 1/1. With respect to regulation, allosterically activated by GTP. Inhibited by UTP. In terms of biological role, catalyzes the reversible phosphorylation of UMP to UDP. This Saccharophagus degradans (strain 2-40 / ATCC 43961 / DSM 17024) protein is Uridylate kinase.